Reading from the N-terminus, the 117-residue chain is Large ribosomal subunit protein bL20 (117 aa).

Belongs to the bacterial ribosomal protein bL20 family.

In terms of biological role, binds directly to 23S ribosomal RNA and is necessary for the in vitro assembly process of the 50S ribosomal subunit. It is not involved in the protein synthesizing functions of that subunit. The protein is Large ribosomal subunit protein bL20 of Geotalea daltonii (strain DSM 22248 / JCM 15807 / FRC-32) (Geobacter daltonii).